The sequence spans 147 residues: D-aminoacyl-tRNA deacylase (147 aa).

The Gly-cisPro motif, important for rejection of L-amino acids signature appears at 136 to 137; sequence GP.

This sequence belongs to the DTD family. As to quaternary structure, homodimer.

Its subcellular location is the cytoplasm. It catalyses the reaction glycyl-tRNA(Ala) + H2O = tRNA(Ala) + glycine + H(+). It carries out the reaction a D-aminoacyl-tRNA + H2O = a tRNA + a D-alpha-amino acid + H(+). Functionally, an aminoacyl-tRNA editing enzyme that deacylates mischarged D-aminoacyl-tRNAs. Also deacylates mischarged glycyl-tRNA(Ala), protecting cells against glycine mischarging by AlaRS. Acts via tRNA-based rather than protein-based catalysis; rejects L-amino acids rather than detecting D-amino acids in the active site. By recycling D-aminoacyl-tRNA to D-amino acids and free tRNA molecules, this enzyme counteracts the toxicity associated with the formation of D-aminoacyl-tRNA entities in vivo and helps enforce protein L-homochirality. The chain is D-aminoacyl-tRNA deacylase from Streptococcus dysgalactiae subsp. equisimilis (Streptococcus equisimilis).